The sequence spans 141 residues: Large ribosomal subunit protein uL11 (141 aa).

The protein belongs to the universal ribosomal protein uL11 family. Part of the ribosomal stalk of the 50S ribosomal subunit. Interacts with L10 and the large rRNA to form the base of the stalk. L10 forms an elongated spine to which L12 dimers bind in a sequential fashion forming a multimeric L10(L12)X complex. One or more lysine residues are methylated.

In terms of biological role, forms part of the ribosomal stalk which helps the ribosome interact with GTP-bound translation factors. The protein is Large ribosomal subunit protein uL11 of Moorella thermoacetica (strain ATCC 39073 / JCM 9320).